The following is a 347-amino-acid chain: Holliday junction branch migration complex subunit RuvB (347 aa).

The interval 4–186 (INEYGSERIV…FGMIFEMNFY (183 aa)) is large ATPase domain (RuvB-L). Residues leucine 25, arginine 26, glycine 67, lysine 70, threonine 71, threonine 72, 133–135 (EDF), arginine 176, tyrosine 186, and arginine 223 contribute to the ATP site. Position 71 (threonine 71) interacts with Mg(2+). The tract at residues 187 to 257 (TQEELKMIIT…IVEEVMRLLG (71 aa)) is small ATPAse domain (RuvB-S). Positions 260-347 (EFGLDEMDRK…GLFDGFGNIE (88 aa)) are head domain (RuvB-H). DNA contacts are provided by arginine 315 and arginine 320.

Belongs to the RuvB family. As to quaternary structure, homohexamer. Forms an RuvA(8)-RuvB(12)-Holliday junction (HJ) complex. HJ DNA is sandwiched between 2 RuvA tetramers; dsDNA enters through RuvA and exits via RuvB. An RuvB hexamer assembles on each DNA strand where it exits the tetramer. Each RuvB hexamer is contacted by two RuvA subunits (via domain III) on 2 adjacent RuvB subunits; this complex drives branch migration. In the full resolvosome a probable DNA-RuvA(4)-RuvB(12)-RuvC(2) complex forms which resolves the HJ.

Its subcellular location is the cytoplasm. It catalyses the reaction ATP + H2O = ADP + phosphate + H(+). The RuvA-RuvB-RuvC complex processes Holliday junction (HJ) DNA during genetic recombination and DNA repair, while the RuvA-RuvB complex plays an important role in the rescue of blocked DNA replication forks via replication fork reversal (RFR). RuvA specifically binds to HJ cruciform DNA, conferring on it an open structure. The RuvB hexamer acts as an ATP-dependent pump, pulling dsDNA into and through the RuvAB complex. RuvB forms 2 homohexamers on either side of HJ DNA bound by 1 or 2 RuvA tetramers; 4 subunits per hexamer contact DNA at a time. Coordinated motions by a converter formed by DNA-disengaged RuvB subunits stimulates ATP hydrolysis and nucleotide exchange. Immobilization of the converter enables RuvB to convert the ATP-contained energy into a lever motion, pulling 2 nucleotides of DNA out of the RuvA tetramer per ATP hydrolyzed, thus driving DNA branch migration. The RuvB motors rotate together with the DNA substrate, which together with the progressing nucleotide cycle form the mechanistic basis for DNA recombination by continuous HJ branch migration. Branch migration allows RuvC to scan DNA until it finds its consensus sequence, where it cleaves and resolves cruciform DNA. This Fervidobacterium nodosum (strain ATCC 35602 / DSM 5306 / Rt17-B1) protein is Holliday junction branch migration complex subunit RuvB.